A 287-amino-acid chain; its full sequence is Eukaryotic translation initiation factor 3 subunit F (287 aa).

One can recognise an MPN domain in the interval 12 to 142 (VRVHPVVLFQ…IKAYVCVSLG (131 aa)).

It belongs to the eIF-3 subunit F family. Component of the eukaryotic translation initiation factor 3 (eIF-3) complex.

It localises to the cytoplasm. Functionally, component of the eukaryotic translation initiation factor 3 (eIF-3) complex, which is involved in protein synthesis of a specialized repertoire of mRNAs and, together with other initiation factors, stimulates binding of mRNA and methionyl-tRNAi to the 40S ribosome. The eIF-3 complex specifically targets and initiates translation of a subset of mRNAs involved in cell proliferation. The protein is Eukaryotic translation initiation factor 3 subunit F of Culex quinquefasciatus (Southern house mosquito).